The primary structure comprises 377 residues: NIF3-like protein 1 (377 aa).

Lysine 109 carries the N6-acetyllysine modification. Residues 244–377 (LLLHTGMGRL…ETDRDPLQVV (134 aa)) form a mediates interaction with COPS2 region. The residue at position 255 (threonine 255) is a Phosphothreonine. Serine 259 is modified (phosphoserine).

Belongs to the GTP cyclohydrolase I type 2/NIF3 family. In terms of assembly, homodimer. Interacts with COPS2. Interacts with THOC7.

The protein localises to the cytoplasm. It localises to the nucleus. In terms of biological role, may function as a transcriptional corepressor through its interaction with COPS2, negatively regulating the expression of genes involved in neuronal differentiation. This is NIF3-like protein 1 from Homo sapiens (Human).